Consider the following 361-residue polypeptide: Ribosomal RNA large subunit methyltransferase M (361 aa).

S-adenosyl-L-methionine is bound by residues serine 187, 220–223 (CPGG), aspartate 239, aspartate 259, and aspartate 276. Lysine 305 serves as the catalytic Proton acceptor.

This sequence belongs to the class I-like SAM-binding methyltransferase superfamily. RNA methyltransferase RlmE family. RlmM subfamily. As to quaternary structure, monomer.

The protein resides in the cytoplasm. It carries out the reaction cytidine(2498) in 23S rRNA + S-adenosyl-L-methionine = 2'-O-methylcytidine(2498) in 23S rRNA + S-adenosyl-L-homocysteine + H(+). In terms of biological role, catalyzes the 2'-O-methylation at nucleotide C2498 in 23S rRNA. The sequence is that of Ribosomal RNA large subunit methyltransferase M from Shewanella sp. (strain MR-4).